Consider the following 249-residue polypeptide: MTRYKAIISYDGTLFSGFQRQSQARTVQEEIEKTLQKLTGGQGIQIHGAGRTDAGVHAYGQVIHFDLEQKRDPEKLRFALDTQTPDDIDVISLEIAADDFHARYHKHFKTYEFLVDIGRPKNPMMRHYATHYPYPLDIAKMQAAIKDLVGTHDFTGFTAAGTSVKNKVRTITAATLTQDPKTGFLVFTFSGNGFLYKQVRNMVGTLLKIGNGRLPIEQIRLVLESKNRQLAGPTAAGNGLYLKEIIYEE.

The active-site Nucleophile is the Asp-53. Residue Tyr-111 participates in substrate binding.

Belongs to the tRNA pseudouridine synthase TruA family. Homodimer.

It catalyses the reaction uridine(38/39/40) in tRNA = pseudouridine(38/39/40) in tRNA. Functionally, formation of pseudouridine at positions 38, 39 and 40 in the anticodon stem and loop of transfer RNAs. In Streptococcus equi subsp. equi (strain 4047), this protein is tRNA pseudouridine synthase A.